Reading from the N-terminus, the 294-residue chain is HTH-type transcriptional regulator TcbR (294 aa).

An HTH lysR-type domain is found at Met1 to Thr58. A DNA-binding region (H-T-H motif) is located at residues Met18–Gln37.

The protein belongs to the LysR transcriptional regulatory family.

Functionally, involved in regulation of chlorinated catechol metabolism. Transcriptional activator of the tcbCDEF chlorocatechol oxidative operon. May bind 2-chloromuconate as an inducer. This is HTH-type transcriptional regulator TcbR (tcbR) from Pseudomonas sp. (strain P51).